The chain runs to 205 residues: Guanylate kinase (205 aa).

Positions 17–195 (SRLLVLSGPS…AVEAVERLLF (179 aa)) constitute a Guanylate kinase-like domain. Residue 24–31 (GPSGVGKD) participates in ATP binding.

The protein belongs to the guanylate kinase family.

The protein resides in the cytoplasm. It carries out the reaction GMP + ATP = GDP + ADP. Its function is as follows. Essential for recycling GMP and indirectly, cGMP. This Gloeobacter violaceus (strain ATCC 29082 / PCC 7421) protein is Guanylate kinase.